Consider the following 189-residue polypeptide: Protein shisa-like-2A (189 aa).

The next 2 helical transmembrane spans lie at 48-68 (SFFP…LVGL) and 70-90 (TAAV…YLFI). The interval 98-189 (LDPGLSLQTT…PTPGPHGPVP (92 aa)) is disordered. Over residues 140-171 (NTHLESNKKQTVSPTCLPQNQFMATVTASNIP) the composition is skewed to polar residues.

It belongs to the shisa family.

It localises to the membrane. In Mus musculus (Mouse), this protein is Protein shisa-like-2A (Shisal2a).